Consider the following 164-residue polypeptide: Putative pre-16S rRNA nuclease (164 aa).

This sequence belongs to the YqgF nuclease family.

The protein resides in the cytoplasm. In terms of biological role, could be a nuclease involved in processing of the 5'-end of pre-16S rRNA. This chain is Putative pre-16S rRNA nuclease, found in Rhizobium johnstonii (strain DSM 114642 / LMG 32736 / 3841) (Rhizobium leguminosarum bv. viciae).